We begin with the raw amino-acid sequence, 433 residues long: MSAIVDIVGREILDSRGNPTVECDVLLESGVMGRAAVPSGASTGSREAIELRDGDKGRYLGKGVLKAVEHLNTEVSEAVLGLDASEQAFLDKTLIDLDGTDNKARIGANATLAVSMAVARAAAEESGLPLYRYFGGMGGMQLPVPMMNVVNGGAHANNSLDLQELMIIPVGAPSFREAVRWGAETFHALKKILHDKGISTAVGDEGGFAPSVENHEAAIQMILEAIDKAGYTPGTQIALGLDCAASEFYKPGKNGSLVYQLDGEGGLSLSAQQWTDMLAGWVDKYPIISIEDGMAEGDWAGWAHLTEVLGKKVQLVGDDLFVTNTKILQEGIDKGIANSILIKINQIGTLTETFAAIEMAKRAGYTAVISHRSGETEDSTIADIAVGTNAGQIKTGSLSRSDRMAKYNQLLRIEEDLGDVAVYPGRAAFYNLR.

(2R)-2-phosphoglycerate is bound at residue Gln163. Glu205 acts as the Proton donor in catalysis. The Mg(2+) site is built by Asp242, Glu291, and Asp318. (2R)-2-phosphoglycerate contacts are provided by Lys343, Arg372, Ser373, and Lys394. Residue Lys343 is the Proton acceptor of the active site.

It belongs to the enolase family. Mg(2+) serves as cofactor.

The protein localises to the cytoplasm. It localises to the secreted. The protein resides in the cell surface. The enzyme catalyses (2R)-2-phosphoglycerate = phosphoenolpyruvate + H2O. It participates in carbohydrate degradation; glycolysis; pyruvate from D-glyceraldehyde 3-phosphate: step 4/5. Its function is as follows. Catalyzes the reversible conversion of 2-phosphoglycerate (2-PG) into phosphoenolpyruvate (PEP). It is essential for the degradation of carbohydrates via glycolysis. This Methylibium petroleiphilum (strain ATCC BAA-1232 / LMG 22953 / PM1) protein is Enolase.